The chain runs to 703 residues: DNA ligase (703 aa).

Residues aspartate 44–aspartate 48, serine 93–leucine 94, and glutamate 127 each bind NAD(+). The active-site N6-AMP-lysine intermediate is the lysine 129. 4 residues coordinate NAD(+): arginine 150, glutamate 186, lysine 302, and lysine 326. Zn(2+)-binding residues include cysteine 420, cysteine 422, cysteine 444, and cysteine 450. The BRCT domain occupies valine 625 to alanine 703.

It belongs to the NAD-dependent DNA ligase family. LigA subfamily. It depends on Mg(2+) as a cofactor. Mn(2+) is required as a cofactor.

It catalyses the reaction NAD(+) + (deoxyribonucleotide)n-3'-hydroxyl + 5'-phospho-(deoxyribonucleotide)m = (deoxyribonucleotide)n+m + AMP + beta-nicotinamide D-nucleotide.. Functionally, DNA ligase that catalyzes the formation of phosphodiester linkages between 5'-phosphoryl and 3'-hydroxyl groups in double-stranded DNA using NAD as a coenzyme and as the energy source for the reaction. It is essential for DNA replication and repair of damaged DNA. The polypeptide is DNA ligase (Chelativorans sp. (strain BNC1)).